The following is a 565-amino-acid chain: DNA ligase B (565 aa).

Catalysis depends on Lys-130, which acts as the N6-AMP-lysine intermediate.

The protein belongs to the NAD-dependent DNA ligase family. LigB subfamily.

It catalyses the reaction NAD(+) + (deoxyribonucleotide)n-3'-hydroxyl + 5'-phospho-(deoxyribonucleotide)m = (deoxyribonucleotide)n+m + AMP + beta-nicotinamide D-nucleotide.. Catalyzes the formation of phosphodiester linkages between 5'-phosphoryl and 3'-hydroxyl groups in double-stranded DNA using NAD as a coenzyme and as the energy source for the reaction. The chain is DNA ligase B from Yersinia enterocolitica serotype O:8 / biotype 1B (strain NCTC 13174 / 8081).